The following is a 305-amino-acid chain: N-acetylneuraminate lyase 2 (305 aa).

Residues Ser47 and Thr48 each coordinate aceneuramate. Tyr137 serves as the catalytic Proton donor. Residue Lys165 is the Schiff-base intermediate with substrate of the active site. Residues Thr167, Gly189, Asp191, Glu192, and Ser208 each coordinate aceneuramate.

The protein belongs to the DapA family. NanA subfamily. Homotetramer.

The protein resides in the cytoplasm. It catalyses the reaction aceneuramate = aldehydo-N-acetyl-D-mannosamine + pyruvate. It participates in amino-sugar metabolism; N-acetylneuraminate degradation; D-fructose 6-phosphate from N-acetylneuraminate: step 1/5. Functionally, catalyzes the reversible aldol cleavage of N-acetylneuraminic acid (sialic acid; Neu5Ac) to form pyruvate and N-acetylmannosamine (ManNAc) via a Schiff base intermediate. The protein is N-acetylneuraminate lyase 2 of Escherichia coli O6:H1 (strain CFT073 / ATCC 700928 / UPEC).